The following is a 76-amino-acid chain: Protein UvsW.1 (76 aa).

As to quaternary structure, probably interacts with UvsW.

Functionally, inhibits the single-stranded annealing activity of UvsW, has no effect on UvsW helicase activity. The chain is Protein UvsW.1 from Escherichia coli (Bacteriophage T4).